We begin with the raw amino-acid sequence, 279 residues long: Thymidylate synthase (279 aa).

Residue 133 to 134 (RR) participates in dUMP binding. Cysteine 154 acts as the Nucleophile in catalysis. DUMP contacts are provided by residues 178 to 181 (RSND), asparagine 189, and 219 to 221 (HIY). Aspartate 181 lines the (6R)-5,10-methylene-5,6,7,8-tetrahydrofolate pocket. Alanine 278 is a (6R)-5,10-methylene-5,6,7,8-tetrahydrofolate binding site.

Belongs to the thymidylate synthase family. Bacterial-type ThyA subfamily. As to quaternary structure, homodimer.

The protein localises to the cytoplasm. The catalysed reaction is dUMP + (6R)-5,10-methylene-5,6,7,8-tetrahydrofolate = 7,8-dihydrofolate + dTMP. Its pathway is pyrimidine metabolism; dTTP biosynthesis. Catalyzes the reductive methylation of 2'-deoxyuridine-5'-monophosphate (dUMP) to 2'-deoxythymidine-5'-monophosphate (dTMP) while utilizing 5,10-methylenetetrahydrofolate (mTHF) as the methyl donor and reductant in the reaction, yielding dihydrofolate (DHF) as a by-product. This enzymatic reaction provides an intracellular de novo source of dTMP, an essential precursor for DNA biosynthesis. This is Thymidylate synthase from Streptococcus pyogenes serotype M6 (strain ATCC BAA-946 / MGAS10394).